We begin with the raw amino-acid sequence, 376 residues long: Neuropeptide receptor 3 (376 aa).

Residues 1–29 lie on the Extracellular side of the membrane; the sequence is MEGGRNCVMTVQQWQPEYNDMNQIRAIFS. Residues 30 to 50 traverse the membrane as a helical segment; the sequence is LLYLLVWVGAIVGNTLVLYVL. Topologically, residues 51–66 are cytoplasmic; sequence TFNQVSLSVRTVFVGC. Residues 67 to 87 form a helical membrane-spanning segment; that stretch reads LAGSDLLMCLFSLPITAISIF. Residues 88-89 lie on the Extracellular side of the membrane; the sequence is SR. A helical transmembrane segment spans residues 90–110; it reads VWVFPAIFCKLIGVFQGGTIF. C98 and C175 are joined by a disulfide. Topologically, residues 111–139 are cytoplasmic; it reads VSSFTLTVIALDRCVLILRPNQEIVNFPR. The helical transmembrane segment at 140-160 threads the bilayer; that stretch reads AVFIVFCIWLLGYSLALPVGI. The Extracellular portion of the chain corresponds to 161-197; sequence YSDIAVYDEICGTFCEENWPDFNPDTGRSGIRRAYGL. A helical transmembrane segment spans residues 198–218; sequence SVLVLQFGIPALISSICYWMI. The Cytoplasmic segment spans residues 219–251; the sequence is SRVMSDQLARRRGHNIRPESETKLVNRKTRANR. A helical transmembrane segment spans residues 252 to 272; the sequence is MMIVMVVGFVLAWMPFNAVNL. Residues 273–284 lie on the Extracellular side of the membrane; that stretch reads YRDLFGISKWYS. A helical membrane pass occupies residues 285-305; sequence TVFALCHVCAMCSAVLNPIIY. Over 306–376 the chain is Cytoplasmic; that stretch reads SWFNPQFRQS…NDYRAGDQLL (71 aa).

The protein belongs to the G-protein coupled receptor 1 family.

The protein localises to the cell membrane. Its function is as follows. G-protein coupled receptor for flp-15 neuropeptides. Receptor activation assays suggest binding to predicted flp-15 peptides, GGPQGPLRF-NH2 and RGPSGPLRF-NH2. Likely involved in Gi/Go-coupled signaling pathways. The protein is Neuropeptide receptor 3 of Caenorhabditis elegans.